The chain runs to 349 residues: S-adenosylmethionine:tRNA ribosyltransferase-isomerase (349 aa).

Belongs to the QueA family. In terms of assembly, monomer.

It localises to the cytoplasm. It carries out the reaction 7-aminomethyl-7-carbaguanosine(34) in tRNA + S-adenosyl-L-methionine = epoxyqueuosine(34) in tRNA + adenine + L-methionine + 2 H(+). The protein operates within tRNA modification; tRNA-queuosine biosynthesis. Functionally, transfers and isomerizes the ribose moiety from AdoMet to the 7-aminomethyl group of 7-deazaguanine (preQ1-tRNA) to give epoxyqueuosine (oQ-tRNA). The chain is S-adenosylmethionine:tRNA ribosyltransferase-isomerase from Pseudomonas fluorescens (strain SBW25).